The chain runs to 823 residues: Nuclear pore complex protein Nup93-1 (823 aa).

Belongs to the nucleoporin interacting component (NIC) family. Part of the nuclear pore complex (NPC). Interacts with msk (via C-terminus); this association might be facilitated by Nup75. Interacts with Mad (preferentially when phosphorylated). Interacts with Nup154 (via N-terminus). Interacts with the Polycomb group (PcG) proteins Pc and E(z).

It is found in the nucleus membrane. It localises to the nucleus. The protein localises to the nuclear pore complex. Its subcellular location is the nucleoplasm. Functionally, required for nuclear pore complex assembly, maintenance and function. Required for nuclear import of phosphorylated Mad via importin msk. Has no role in classical nuclear localization signal (cNLS)-dependent nuclear import via importin-beta. Mediates the association between the nuclear pore complex and a subclass of silenced regions bound by Polycomb group (PcG) proteins, enables long-range interactions between Polycomb loci and contributes to repression of polycomb targets. Together with Nup62 and Nup154, contributes to karyosome morphology and chromatin organization including attachment to the nuclear envelope in oocytes and nurse cells. This is Nuclear pore complex protein Nup93-1 from Drosophila melanogaster (Fruit fly).